A 216-amino-acid polypeptide reads, in one-letter code: Adenylate kinase (216 aa).

ATP is bound at residue 10–15; it reads GAGKGT. The interval 30–59 is NMP; sequence STGDIFRANIKEKTPLGIEAKRYMDNGQLV. Residues T31, R36, 57–59, 85–88, and Q92 contribute to the AMP site; these read QLV and GFPR. Residues 126-163 form an LID region; sequence GRRVCTSCGASYHIRFNPPKIEGKCDICDNELIQRKDD. R127 provides a ligand contact to ATP. Zn(2+) contacts are provided by C130 and C133. 136–137 contacts ATP; that stretch reads SY. Residues C150 and C153 each coordinate Zn(2+). The AMP site is built by R160 and R171. Residue E199 participates in ATP binding.

It belongs to the adenylate kinase family. Monomer.

The protein resides in the cytoplasm. The catalysed reaction is AMP + ATP = 2 ADP. The protein operates within purine metabolism; AMP biosynthesis via salvage pathway; AMP from ADP: step 1/1. Catalyzes the reversible transfer of the terminal phosphate group between ATP and AMP. Plays an important role in cellular energy homeostasis and in adenine nucleotide metabolism. The polypeptide is Adenylate kinase (Clostridium botulinum (strain Loch Maree / Type A3)).